The chain runs to 539 residues: Chaperonin GroEL (539 aa).

Residues 29–32, 86–90, glycine 413, 476–478, and aspartate 492 contribute to the ATP site; these read TIGP, DGTTT, and NAA.

Belongs to the chaperonin (HSP60) family. As to quaternary structure, forms a cylinder of 14 subunits composed of two heptameric rings stacked back-to-back. Interacts with the co-chaperonin GroES.

Its subcellular location is the cytoplasm. The enzyme catalyses ATP + H2O + a folded polypeptide = ADP + phosphate + an unfolded polypeptide.. Functionally, together with its co-chaperonin GroES, plays an essential role in assisting protein folding. The GroEL-GroES system forms a nano-cage that allows encapsulation of the non-native substrate proteins and provides a physical environment optimized to promote and accelerate protein folding. In Staphylococcus haemolyticus (strain JCSC1435), this protein is Chaperonin GroEL.